The sequence spans 544 residues: Chaperonin GroEL (544 aa).

ATP contacts are provided by residues 29–32, 86–90, Gly-413, 476–478, and Asp-492; these read TLGP, DGTTT, and NAA.

Belongs to the chaperonin (HSP60) family. In terms of assembly, forms a cylinder of 14 subunits composed of two heptameric rings stacked back-to-back. Interacts with the co-chaperonin GroES.

It is found in the cytoplasm. The enzyme catalyses ATP + H2O + a folded polypeptide = ADP + phosphate + an unfolded polypeptide.. In terms of biological role, together with its co-chaperonin GroES, plays an essential role in assisting protein folding. The GroEL-GroES system forms a nano-cage that allows encapsulation of the non-native substrate proteins and provides a physical environment optimized to promote and accelerate protein folding. This Halalkalibacterium halodurans (strain ATCC BAA-125 / DSM 18197 / FERM 7344 / JCM 9153 / C-125) (Bacillus halodurans) protein is Chaperonin GroEL.